Consider the following 1659-residue polypeptide: Fatty acid synthase subunit alpha (1659 aa).

A disordered region spans residues 114-139; the sequence is TQAQASGGAGTIAGAGSSTAPVTAPP. A Carrier domain is found at 160 to 235; it reads AQAFEIVRTL…AALQKTFTGQ (76 aa). The residue at position 195 (Ser195) is an O-(pantetheine 4'-phosphoryl)serine. Residues 588 to 826 are ketoreductase (KR) domain; that stretch reads GRSVLITGAG…LCLMFNTMCS (239 aa). In terms of domain architecture, Ketosynthase family 3 (KS3) spans 1030–1575; that stretch reads KQLLHEVLIQ…QKGAQTIVVH (546 aa). Catalysis depends on for beta-ketoacyl synthase activity residues Cys1217, His1458, and His1499. The disordered stretch occupies residues 1631-1659; that stretch reads ETLLDPTPPQTNVDDRVARSIVQQESAEP.

Belongs to the thiolase-like superfamily. Fungal fatty acid synthetase subunit alpha family. As to quaternary structure, [Alpha(6)beta(6)] hexamers of two multifunctional subunits (alpha and beta). Post-translationally, 4'-phosphopantetheine is transferred from CoA to a specific serine of the acyl carrier domain by the C-terminal PPT domain. This modification is essential for activity because fatty acids are bound in thioester linkage to the sulfhydryl of the prosthetic group.

The enzyme catalyses acetyl-CoA + n malonyl-CoA + 2n NADPH + 4n H(+) = a long-chain-acyl-CoA + n CoA + n CO2 + 2n NADP(+).. The catalysed reaction is a fatty acyl-[ACP] + malonyl-[ACP] + H(+) = a 3-oxoacyl-[ACP] + holo-[ACP] + CO2. It catalyses the reaction a (3R)-hydroxyacyl-[ACP] + NADP(+) = a 3-oxoacyl-[ACP] + NADPH + H(+). The protein operates within secondary metabolite biosynthesis. Its function is as follows. Fatty acid synthase subunit alpha; part of the gene cluster that mediates the biosynthesis of aspercryptins, linear lipopeptides built from six amino acids including 2 highly unusual and nonproteogenic amino acids, 2-amino-octanoic acid (2aoa) and 2-amino-dodecanol (2adol). The core structure of aspercryptins is as follows: Ser/Ala-Thr-Ile/Val-2aoa-Asn-2adol. The first step of aspercryptin biosynthesis is the generation of the fatty acid precursors, octanoic and dodecanoic acids, by the FAS subunits atnF and atnM. The fatty acid precursors are likely transformed into the corresponding alpha-amino fatty acids in three steps. First, they are hydroxylated by the cytochrome P450 monooxygenase atnE, then oxidized to the corresponding alpha-keto acids by the NAD(P)-dependent oxidoreductase atnD, and finally converted to the alpha-amino fatty acids by the PLP-dependent aminotransferases atnH or atnJ. the alpha-amino fatty acids, 2-amino-octanoic and 2-amino-dodecanoic acids, are recognized, activated, and covalently tethered to the NRPS atnA by its fourth and sixth adenylation domains. The second module of atnA is the Thr module and contains an epimerase (E) domain responsible for the epimerization of Thr to D-allo-Thr. Additionally, despite atnA having only one epimerase domain, the first amino acid of aspercryptin A1 is D-Ser, suggesting that serine is either loaded directly as D-Ser on the first module or that the epimerase domain in the threonine module epimerizes both L-Ser and L-Thr. After condensation of the hexapeptide of aspercryptin, the C-terminal reductase (TE) domain might be involved in the reductive release and production of the aldehyde hexapeptide. Further reduction would generate aspercryptins. The variety of aspercryptins produced reflects the flexibility of the atnA NRPS, allowing incorporation of alanine instead of serine, valine for isoleucine, and a C10 fatty amino alcohol instead of the C12 version. AtnB seems to be involved in the selectivity for Ile versus Val by the third module. Moreover, type B, C and D aspercryptins have an additional N-terminal cichorine, acetyl and propionyl group respectively. This chain is Fatty acid synthase subunit alpha, found in Emericella nidulans (strain FGSC A4 / ATCC 38163 / CBS 112.46 / NRRL 194 / M139) (Aspergillus nidulans).